Reading from the N-terminus, the 308-residue chain is Coenzyme PQQ synthesis protein B (308 aa).

It belongs to the PqqB family.

It functions in the pathway cofactor biosynthesis; pyrroloquinoline quinone biosynthesis. Its function is as follows. May be involved in the transport of PQQ or its precursor to the periplasm. This chain is Coenzyme PQQ synthesis protein B, found in Rhodopseudomonas palustris (strain BisB5).